An 881-amino-acid polypeptide reads, in one-letter code: EEF1AKMT4-ECE2 readthrough transcript protein (881 aa).

Residues 1–160 (MASPRTPVSP…VHTVDQVLSE (160 aa)) form a methyltransferase-like region region. At 1-178 (MASPRTPVSP…QLFGSHTQLE (178 aa)) the chain is on the cytoplasmic side. S-adenosyl-L-methionine-binding residues include Trp-26 and Tyr-30. Tyr-39 is subject to Phosphotyrosine. S-adenosyl-L-methionine-binding positions include Trp-41, Gly-66, 88–89 (DY), 113–114 (DV), and Lys-130. His-174 bears the Phosphoserine mark. The chain crosses the membrane as a helical; Signal-anchor for type II membrane protein span at residues 179–199 (LVLAGLILVLAALLLGCLVAL). Residues 200 to 881 (WVHRDPAHST…MNPGQLCEVW (682 aa)) lie on the Lumenal side of the membrane. The 673-residue stretch at 209–881 (TCVTEACIRV…MNPGQLCEVW (673 aa)) folds into the Peptidase M13 domain. Intrachain disulfides connect Cys-210–Cys-215, Cys-233–Cys-866, Cys-241–Cys-826, Cys-297–Cys-546, and Cys-755–Cys-878. Residues Asn-277, Asn-281, Asn-322, Asn-382, Asn-427, Asn-494, and Asn-650 are each glycosylated (N-linked (GlcNAc...) asparagine). Residue His-718 participates in Zn(2+) binding. Residue Glu-719 is part of the active site. His-722 contacts Zn(2+). Asn-743 and Asn-751 each carry an N-linked (GlcNAc...) asparagine glycan. Glu-778 lines the Zn(2+) pocket. Asp-782 acts as the Proton donor in catalysis.

The protein in the N-terminal section; belongs to the methyltransferase superfamily. This sequence in the C-terminal section; belongs to the peptidase M13 family. Zn(2+) is required as a cofactor. As to expression, expressed at high levels in central nervous system. Expressed in adrenal glands, ovary and uterus, and at low levels in heart.

It localises to the golgi apparatus membrane. It is found in the cytoplasmic vesicle. The protein resides in the secretory vesicle membrane. It carries out the reaction Hydrolysis of the 21-Trp-|-Val-22 bond in big endothelin to form endothelin 1.. With respect to regulation, inhibited by phosphoramidon. Converts big endothelin-1 to endothelin-1. May also have methyltransferase activity. May play a role in amyloid-beta processing. The sequence is that of EEF1AKMT4-ECE2 readthrough transcript protein from Mus musculus (Mouse).